Reading from the N-terminus, the 206-residue chain is dITP/XTP pyrophosphatase (206 aa).

7 to 12 (SSHGYK) is a binding site for substrate. The active-site Proton acceptor is the Asp-70. Asp-70 contacts Mg(2+). Residues Thr-71, 154-157 (FGYD), Lys-177, and 182-183 (HR) contribute to the substrate site.

The protein belongs to the HAM1 NTPase family. In terms of assembly, homodimer. The cofactor is Mg(2+).

It carries out the reaction XTP + H2O = XMP + diphosphate + H(+). It catalyses the reaction dITP + H2O = dIMP + diphosphate + H(+). The catalysed reaction is ITP + H2O = IMP + diphosphate + H(+). Its function is as follows. Pyrophosphatase that catalyzes the hydrolysis of nucleoside triphosphates to their monophosphate derivatives, with a high preference for the non-canonical purine nucleotides XTP (xanthosine triphosphate), dITP (deoxyinosine triphosphate) and ITP. Seems to function as a house-cleaning enzyme that removes non-canonical purine nucleotides from the nucleotide pool, thus preventing their incorporation into DNA/RNA and avoiding chromosomal lesions. This chain is dITP/XTP pyrophosphatase, found in Chlamydia pneumoniae (Chlamydophila pneumoniae).